Here is a 704-residue protein sequence, read N- to C-terminus: MLTPIIRKFQYGQHTVTIETGMMARQATAAVMVSMDDTAVFVTVVGQKKAKPGQSFFPLTVNYQERTYAAGRIPGSFFRREGRPSEGETLTSRLIDRPIRPLFPDSFLNEVQVIATVVSVNPQINPDIVALIGASAALSLSGIPFNGPIGAARVGFINDQYVLNPTTDELKESRLDLVVAGTAGAVLMVESEADILSEEQMLGAVVFGHEQQQVVIENINALVAEAGKPKWDWQAEPVNEALHARVAELAEARLGDAYRITEKQERYTQVDAIKADVTEALLAQDDTLDAAEIQDILASVEKNVVRSRVLRGEPRIDGREKDMIRGLDVRTGILPRTHGSALFTRGETQALVTATLGTARDAQNIDELMGERTDSFLLHYNFPPYCVGETGMVGSPKRREIGHGRLAKRGVLAVMPSASEFPYTIRVVSEITESNGSSSMASVCGASLALMDAGVPIKAAVAGIAMGLVKEGDNFVVLSDILGDEDHLGDMDFKVAGSRDGVTALQMDIKIEGITREIMQVALNQAKGARLHILGVMEQAISTPRGDISEFAPRIYTMKINPEKIKDVIGKGGSVIRALTDETGTTIEIEDDGTIKIAATDGDKAKHAIRRIEEITAEIEVGRIYAGKVTRIVDFGAFVAIGGGKEGLVHISQIADKRVEKVTDYLQMGQDVPVKVMEVDRQGRIRLSIKEATTPDAEAPEAAE.

Residues D486 and D492 each contribute to the Mg(2+) site. Residues 553 to 612 (PRIYTMKINPEKIKDVIGKGGSVIRALTDETGTTIEIEDDGTIKIAATDGDKAKHAIRRI) enclose the KH domain. An S1 motif domain is found at 622 to 690 (GRIYAGKVTR…RQGRIRLSIK (69 aa)).

It belongs to the polyribonucleotide nucleotidyltransferase family. Component of the RNA degradosome, which is a multiprotein complex involved in RNA processing and mRNA degradation. It depends on Mg(2+) as a cofactor.

It is found in the cytoplasm. It carries out the reaction RNA(n+1) + phosphate = RNA(n) + a ribonucleoside 5'-diphosphate. In terms of biological role, involved in mRNA degradation. Catalyzes the phosphorolysis of single-stranded polyribonucleotides processively in the 3'- to 5'-direction. The chain is Polyribonucleotide nucleotidyltransferase from Yersinia pseudotuberculosis serotype IB (strain PB1/+).